A 343-amino-acid chain; its full sequence is NAD-dependent deacetylase sir2E (343 aa).

A Deacetylase sirtuin-type domain is found at Y27–E300. Catalysis depends on H152, which acts as the Proton acceptor. Zn(2+) contacts are provided by C160, C165, C200, and C203.

This sequence belongs to the sirtuin family.

It is found in the nucleus. It carries out the reaction N(6)-acetyl-L-lysyl-[protein] + NAD(+) + H2O = 2''-O-acetyl-ADP-D-ribose + nicotinamide + L-lysyl-[protein]. In terms of biological role, NAD-dependent deacetylase, which plays an important role in the regulation of transcriptional repression. May play a role in cell cycle. When overexpressed, the cell cycle is accelerated. This chain is NAD-dependent deacetylase sir2E (sir2E), found in Dictyostelium discoideum (Social amoeba).